The following is a 207-amino-acid chain: LexA repressor (207 aa).

The segment at residues 28–48 is a DNA-binding region (H-T-H motif); sequence VREIGEAVGLASSSTVHGHLS. Catalysis depends on for autocatalytic cleavage activity residues Ser130 and Lys168.

Belongs to the peptidase S24 family. Homodimer.

The enzyme catalyses Hydrolysis of Ala-|-Gly bond in repressor LexA.. In terms of biological role, represses a number of genes involved in the response to DNA damage (SOS response), including recA and lexA. In the presence of single-stranded DNA, RecA interacts with LexA causing an autocatalytic cleavage which disrupts the DNA-binding part of LexA, leading to derepression of the SOS regulon and eventually DNA repair. This is LexA repressor from Staphylococcus aureus (strain Mu3 / ATCC 700698).